The sequence spans 636 residues: Probable potassium transport system protein Kup (636 aa).

Helical transmembrane passes span 23 to 43 (MALMLGALGVVYGDIGTSPLY), 57 to 77 (PAHVLGVLSILFWLLMIVVSL), 111 to 131 (WLLIVLGIFGAALFYGDSMIT), 148 to 168 (HTLEPWVVPVALVVLVALFAI), 179 to 199 (LFGPIMALWFATLAVLGGYQI), 217 to 237 (FIAEFPVMSFLLLGAVVLALT), 258 to 278 (WFAMVLPALTLCYFGQGALLL), 287 to 307 (PFFLMAPEWGLAALVGLATVA), 348 to 368 (IYLPQVNALLLCAVLVLVLLF), 377 to 397 (AYGFAVTGTMLTTSVLAFAVL), 409 to 429 (WMVLLGALLVIDILLFGANIF), and 431 to 451 (IHEGGWLPLLVGVVVFTLMMT).

This sequence belongs to the HAK/KUP transporter (TC 2.A.72) family.

The protein localises to the cell inner membrane. It catalyses the reaction K(+)(in) + H(+)(in) = K(+)(out) + H(+)(out). Its function is as follows. Transport of potassium into the cell. Likely operates as a K(+):H(+) symporter. This chain is Probable potassium transport system protein Kup, found in Bordetella bronchiseptica (strain ATCC BAA-588 / NCTC 13252 / RB50) (Alcaligenes bronchisepticus).